The sequence spans 258 residues: UDP-N-acetylenolpyruvoylglucosamine reductase (258 aa).

Residue Arg-142 is part of the active site. The active-site Proton donor is Ser-184. The active site involves Glu-254.

The protein belongs to the MurB family. FAD is required as a cofactor.

Its subcellular location is the cytoplasm. It catalyses the reaction UDP-N-acetyl-alpha-D-muramate + NADP(+) = UDP-N-acetyl-3-O-(1-carboxyvinyl)-alpha-D-glucosamine + NADPH + H(+). It participates in cell wall biogenesis; peptidoglycan biosynthesis. Its function is as follows. Cell wall formation. The polypeptide is UDP-N-acetylenolpyruvoylglucosamine reductase (Campylobacter jejuni (strain RM1221)).